The primary structure comprises 461 residues: Cysteine--tRNA ligase (461 aa).

Cys-30 is a binding site for Zn(2+). A 'HIGH' region motif is present at residues 32-42 (VTIYDLCHIGH). Zn(2+) contacts are provided by Cys-211, His-236, and Glu-240. A 'KMSKS' region motif is present at residues 268 to 272 (KMSKS). ATP is bound at residue Lys-271.

Belongs to the class-I aminoacyl-tRNA synthetase family. Monomer. The cofactor is Zn(2+).

The protein localises to the cytoplasm. The enzyme catalyses tRNA(Cys) + L-cysteine + ATP = L-cysteinyl-tRNA(Cys) + AMP + diphosphate. This chain is Cysteine--tRNA ligase, found in Shewanella sp. (strain W3-18-1).